A 287-amino-acid polypeptide reads, in one-letter code: 3-alpha-hydroxysteroid sulfotransferase (287 aa).

Residue 44–49 participates in 3'-phosphoadenylyl sulfate binding; the sequence is KSGTNW. Residues tryptophan 72 and tryptophan 77 each coordinate substrate. The Proton acceptor role is filled by histidine 99. 3'-phosphoadenylyl sulfate is bound by residues arginine 121, serine 129, tyrosine 184, 218–223, and 247–249; these read SSFQFM and RKG.

This sequence belongs to the sulfotransferase 1 family. As to quaternary structure, homodimer. Adrenal gland and liver.

It is found in the cytoplasm. The catalysed reaction is an alcohol + 3'-phosphoadenylyl sulfate = an alkyl sulfate + adenosine 3',5'-bisphosphate + H(+). Functionally, sulfotransferase that utilizes 3'-phospho-5'-adenylyl sulfate (PAPS) as sulfonate donor to catalyze the sulfonation of 3-alpha-hydroxyl groups of neutral steroids. This Cavia porcellus (Guinea pig) protein is 3-alpha-hydroxysteroid sulfotransferase (STD1).